The sequence spans 313 residues: Dihydroorotate dehydrogenase B (NAD(+)), catalytic subunit (313 aa).

FMN-binding positions include serine 21 and 45 to 46 (KA). Residues lysine 45 and 69-73 (NAIGL) each bind substrate. The FMN site is built by asparagine 99 and asparagine 127. Residue asparagine 127 participates in substrate binding. Cysteine 130 functions as the Nucleophile in the catalytic mechanism. Isoleucine 191 contacts FMN. 192–193 (NT) serves as a coordination point for substrate. FMN-binding positions include glycine 217, 243 to 244 (GG), and 265 to 266 (GT).

Belongs to the dihydroorotate dehydrogenase family. Type 1 subfamily. In terms of assembly, heterotetramer of 2 PyrK and 2 PyrD type B subunits. The cofactor is FMN.

It localises to the cytoplasm. The catalysed reaction is (S)-dihydroorotate + NAD(+) = orotate + NADH + H(+). It participates in pyrimidine metabolism; UMP biosynthesis via de novo pathway; orotate from (S)-dihydroorotate (NAD(+) route): step 1/1. Its function is as follows. Catalyzes the conversion of dihydroorotate to orotate with NAD(+) as electron acceptor. In Bacillus caldolyticus, this protein is Dihydroorotate dehydrogenase B (NAD(+)), catalytic subunit (pyrD).